Here is a 99-residue protein sequence, read N- to C-terminus: Ubiquitin-related modifier 1 homolog 2 (99 aa).

Position 99 is a 1-thioglycine (Gly-99). Gly-99 is covalently cross-linked (Glycyl lysine isopeptide (Gly-Lys) (interchain with K-? in acceptor proteins)).

It belongs to the URM1 family. In terms of processing, C-terminal thiocarboxylation occurs in 2 steps, it is first acyl-adenylated (-COAMP) via the hesA/moeB/thiF part of the MOCS3 homolog, then thiocarboxylated (-COSH) via the rhodanese domain of the MOCS3 homolog.

The protein localises to the cytoplasm. It participates in tRNA modification; 5-methoxycarbonylmethyl-2-thiouridine-tRNA biosynthesis. Its function is as follows. Acts as a sulfur carrier required for 2-thiolation of mcm(5)S(2)U at tRNA wobble positions of cytosolic tRNA(Lys), tRNA(Glu) and tRNA(Gln). Serves as sulfur donor in tRNA 2-thiolation reaction by being thiocarboxylated (-COSH) at its C-terminus by MOCS3. The sulfur is then transferred to tRNA to form 2-thiolation of mcm(5)S(2)U. Also acts as a ubiquitin-like protein (UBL) that is covalently conjugated via an isopeptide bond to lysine residues of target proteins. The thiocarboxylated form serves as substrate for conjugation and oxidative stress specifically induces the formation of UBL-protein conjugates. This chain is Ubiquitin-related modifier 1 homolog 2, found in Arabidopsis thaliana (Mouse-ear cress).